The primary structure comprises 509 residues: H/ACA ribonucleoprotein complex subunit DKC1 (509 aa).

The interval Met1–Glu25 is disordered. Ala2 carries the post-translational modification N-acetylalanine. Residues Ala2 to Pro22 are nucleolar localization. Residues Pro11–Arg20 are compositionally biased toward basic residues. Glycyl lysine isopeptide (Lys-Gly) (interchain with G-Cter in SUMO2) cross-links involve residues Lys21, Lys40, and Lys44. The active-site Nucleophile is Asp126. Lys192 is covalently cross-linked (Glycyl lysine isopeptide (Lys-Gly) (interchain with G-Cter in SUMO2)). Positions His297–Met372 constitute a PUA domain. Residues Trp381–Gly509 form a disordered region. At Ser388 the chain carries Phosphoserine. Glycyl lysine isopeptide (Lys-Gly) (interchain with G-Cter in SUMO2) cross-links involve residues Lys395 and Lys425. The segment covering Asp416–Lys425 has biased composition (basic and acidic residues). The tract at residues Lys447–Gly509 is nuclear and nucleolar localization. 2 positions are modified to phosphoserine: Ser452 and Ser454. Position 460 is a phosphothreonine (Thr460). Positions Arg466–Lys475 are enriched in basic residues. Positions Gly481–Gly490 are enriched in acidic residues. Ser508 bears the Phosphoserine mark.

The protein belongs to the pseudouridine synthase TruB family. Part of the H/ACA small nucleolar ribonucleoprotein (H/ACA snoRNP) complex, which contains NHP2/NOLA2, GAR1/NOLA1, NOP10/NOLA3, and DKC1/NOLA4, which is presumed to be the catalytic subunit. The complex contains a stable core formed by binding of one or two NOP10-DKC1 heterodimers to NHP2; GAR1 subsequently binds to this core via DKC1. The complex binds a box H/ACA small nucleolar RNA (snoRNA), which may target the specific site of modification within the RNA substrate. During assembly, the complex contains NAF1 instead of GAR1/NOLA1. The complex also interacts with TERC, which contains a 3'-terminal domain related to the box H/ACA snoRNAs. Specific interactions with snoRNAs or TERC are mediated by GAR1 and NHP2. Associates with NOLC1/NOPP140. H/ACA snoRNPs interact with the SMN complex, consisting of SMN1 or SMN2, GEMIN2/SIP1, DDX20/GEMIN3, and GEMIN4. This is mediated by interaction between GAR1 and SMN1 or SMN2. The SMN complex may be required for correct assembly of the H/ACA snoRNP complex. Component of the telomerase holoenzyme complex composed of one molecule of TERT, one molecule of WRAP53/TCAB1, two molecules of H/ACA ribonucleoprotein complex subunits DKC1, NOP10, NHP2 and GAR1, and a telomerase RNA template component (TERC). The telomerase holoenzyme complex is associated with TEP1, SMG6/EST1A and POT1. Interacts with SHQ1; this interaction may lead to the stabilization of DKC1, from the time of its synthesis until its association with NOP10, NHP2, and NAF1 at the nascent H/ACA RNA. Interacts with HMBOX1. Interacts with DHX36.

The protein resides in the nucleus. The protein localises to the nucleolus. It is found in the cajal body. It catalyses the reaction uridine in 5S rRNA = pseudouridine in 5S rRNA. Its function is as follows. Catalytic subunit of H/ACA small nucleolar ribonucleoprotein (H/ACA snoRNP) complex, which catalyzes pseudouridylation of rRNA. This involves the isomerization of uridine such that the ribose is subsequently attached to C5, instead of the normal N1. Each rRNA can contain up to 100 pseudouridine ('psi') residues, which may serve to stabilize the conformation of rRNAs. Required for ribosome biogenesis and telomere maintenance. Also required for correct processing or intranuclear trafficking of TERC, the RNA component of the telomerase reverse transcriptase (TERT) holoenzyme. This Rattus norvegicus (Rat) protein is H/ACA ribonucleoprotein complex subunit DKC1 (Dkc1).